A 158-amino-acid polypeptide reads, in one-letter code: 6,7-dimethyl-8-ribityllumazine synthase (158 aa).

5-amino-6-(D-ribitylamino)uracil-binding positions include Phe23, 61–63 (SFE), and 85–87 (AVI). (2S)-2-hydroxy-3-oxobutyl phosphate is bound at residue 90–91 (ET). His93 acts as the Proton donor in catalysis. 5-amino-6-(D-ribitylamino)uracil is bound at residue Phe118. Arg132 serves as a coordination point for (2S)-2-hydroxy-3-oxobutyl phosphate.

It belongs to the DMRL synthase family.

The catalysed reaction is (2S)-2-hydroxy-3-oxobutyl phosphate + 5-amino-6-(D-ribitylamino)uracil = 6,7-dimethyl-8-(1-D-ribityl)lumazine + phosphate + 2 H2O + H(+). It functions in the pathway cofactor biosynthesis; riboflavin biosynthesis; riboflavin from 2-hydroxy-3-oxobutyl phosphate and 5-amino-6-(D-ribitylamino)uracil: step 1/2. In terms of biological role, catalyzes the formation of 6,7-dimethyl-8-ribityllumazine by condensation of 5-amino-6-(D-ribitylamino)uracil with 3,4-dihydroxy-2-butanone 4-phosphate. This is the penultimate step in the biosynthesis of riboflavin. In Prochlorococcus marinus (strain AS9601), this protein is 6,7-dimethyl-8-ribityllumazine synthase.